We begin with the raw amino-acid sequence, 257 residues long: Glucanase inhibitor protein 1 (257 aa).

The signal sequence occupies residues 1-28 (MKVFPALTSALVALGTAGVEAEHVQRSL). The Peptidase S1 domain maps to 29–256 (VMGGGTVPVG…GLEWINSVIK (228 aa)). Cys56 and Cys72 are oxidised to a cystine. N-linked (GlcNAc...) asparagine glycans are attached at residues Asn107 and Asn180. 2 cysteine pairs are disulfide-bonded: Cys181–Cys191 and Cys201–Cys232. An N-linked (GlcNAc...) asparagine glycan is attached at Asn213.

This sequence belongs to the peptidase S1 family. Interacts with host endoglucanases EGaseA.

Its subcellular location is the secreted. Secreted effector that suppresses host plant glucan elicitor-mediated defense responses. Targets host endoglucanase EGaseA and inhibits the EGaseA-mediated release of elicitor-active glucan oligosaccharides from P.sojae cell walls. The chain is Glucanase inhibitor protein 1 from Phytophthora sojae (Soybean stem and root rot agent).